We begin with the raw amino-acid sequence, 243 residues long: MRYKAIVEYVGTGFSGWQKQMSAPSVQEELESVLSFLLKEKIAVNVAGRTDAGVHALGQVFHFDARESTLQPFQIVNAVNYHLKEKLIVLLKIEIVDETFDARFSAIRRHYQYKITNRKTPLAVFKNRSWHVPQTLNLDLIREQAQYLVGKHDFQSFRSSKCGASNAIRTLDRLEVEKNGEEMIFHASAKSFLHHQVRIMVGTLVAIASGKLMSVTEILSKKNRRYAGPTAPPCGLYLLKVDY.

Catalysis depends on Asp51, which acts as the Nucleophile. Tyr111 is a substrate binding site.

It belongs to the tRNA pseudouridine synthase TruA family. As to quaternary structure, homodimer.

The enzyme catalyses uridine(38/39/40) in tRNA = pseudouridine(38/39/40) in tRNA. In terms of biological role, formation of pseudouridine at positions 38, 39 and 40 in the anticodon stem and loop of transfer RNAs. The sequence is that of tRNA pseudouridine synthase A from Neorickettsia sennetsu (strain ATCC VR-367 / Miyayama) (Ehrlichia sennetsu).